Consider the following 217-residue polypeptide: Ribonuclease HII 2 (217 aa).

The RNase H type-2 domain occupies 28-217; sequence GLLAGVDEAG…VREVLLERRP (190 aa). 3 residues coordinate a divalent metal cation: D34, E35, and D126.

It belongs to the RNase HII family. It depends on Mn(2+) as a cofactor. Mg(2+) is required as a cofactor.

It is found in the cytoplasm. The enzyme catalyses Endonucleolytic cleavage to 5'-phosphomonoester.. Its function is as follows. Endonuclease that specifically degrades the RNA of RNA-DNA hybrids. This chain is Ribonuclease HII 2, found in Methylibium petroleiphilum (strain ATCC BAA-1232 / LMG 22953 / PM1).